A 714-amino-acid polypeptide reads, in one-letter code: Fatty acid oxidation complex subunit alpha (714 aa).

The enoyl-CoA hydratase stretch occupies residues 1 to 190 (MEMASVFTLN…KLGLVDDVVP (190 aa)). The tract at residues 306–714 (APLNSVGILG…FWKTTATDLQ (409 aa)) is 3-hydroxyacyl-CoA dehydrogenase.

It in the N-terminal section; belongs to the enoyl-CoA hydratase/isomerase family. The protein in the central section; belongs to the 3-hydroxyacyl-CoA dehydrogenase family. As to quaternary structure, heterotetramer of two alpha chains (FadJ) and two beta chains (FadI).

Its subcellular location is the cytoplasm. The catalysed reaction is a (3S)-3-hydroxyacyl-CoA = a (2E)-enoyl-CoA + H2O. It catalyses the reaction a 4-saturated-(3S)-3-hydroxyacyl-CoA = a (3E)-enoyl-CoA + H2O. It carries out the reaction a (3S)-3-hydroxyacyl-CoA + NAD(+) = a 3-oxoacyl-CoA + NADH + H(+). The enzyme catalyses (3S)-3-hydroxybutanoyl-CoA = (3R)-3-hydroxybutanoyl-CoA. It participates in lipid metabolism; fatty acid beta-oxidation. In terms of biological role, catalyzes the formation of a hydroxyacyl-CoA by addition of water on enoyl-CoA. Also exhibits 3-hydroxyacyl-CoA epimerase and 3-hydroxyacyl-CoA dehydrogenase activities. In Escherichia coli O139:H28 (strain E24377A / ETEC), this protein is Fatty acid oxidation complex subunit alpha.